The primary structure comprises 547 residues: Chaperonin GroEL 1 (547 aa).

ATP contacts are provided by residues 30 to 33, Lys-51, 87 to 91, Gly-415, and Asp-496; these read TLGP and DGTTT.

This sequence belongs to the chaperonin (HSP60) family. Forms a cylinder of 14 subunits composed of two heptameric rings stacked back-to-back. Interacts with the co-chaperonin GroES.

It localises to the cytoplasm. It carries out the reaction ATP + H2O + a folded polypeptide = ADP + phosphate + an unfolded polypeptide.. Together with its co-chaperonin GroES, plays an essential role in assisting protein folding. The GroEL-GroES system forms a nano-cage that allows encapsulation of the non-native substrate proteins and provides a physical environment optimized to promote and accelerate protein folding. The protein is Chaperonin GroEL 1 of Rhodopseudomonas palustris (strain ATCC BAA-98 / CGA009).